An 830-amino-acid polypeptide reads, in one-letter code: Pentatricopeptide repeat-containing protein At5g55740, chloroplastic (830 aa).

Residues 1–59 (MASLPFNTIPNKVPFSVSSKPSSKHHDEQAHSPSSTSYFHRVSSLCKNGEIKEALSLVT) constitute a chloroplast transit peptide. The segment at 15–36 (FSVSSKPSSKHHDEQAHSPSST) is disordered. PPR repeat units lie at residues 69 to 103 (GPEIYGEILQGCVYERDLSTGKQIHARILKNGDFY), 106 to 136 (NEYIETKLVIFYAKCDALEIAEVLFSKLRVR), 137 to 171 (NVFSWAAIIGVKCRIGLCEGALMGFVEMLENEIFP), 172 to 206 (DNFVVPNVCKACGALKWSRFGRGVHGYVVKSGLED), 207 to 237 (CVFVASSLADMYGKCGVLDDASKVFDEIPDR), 238 to 272 (NAVAWNALMVGYVQNGKNEEAIRLFSDMRKQGVEP), 273 to 307 (TRVTVSTCLSASANMGGVEEGKQSHAIAIVNGMEL), 308 to 338 (DNILGTSLLNFYCKVGLIEYAEMVFDRMFEK), 339 to 373 (DVVTWNLIISGYVQQGLVEDAIYMCQLMRLEKLKY), 374 to 408 (DCVTLATLMSAAARTENLKLGKEVQCYCIRHSFES), 409 to 439 (DIVLASTVMDMYAKCGSIVDAKKVFDSTVEK), 440 to 474 (DLILWNTLLAAYAESGLSGEALRLFYGMQLEGVPP), 475 to 509 (NVITWNLIILSLLRNGQVDEAKDMFLQMQSSGIIP), 510 to 544 (NLISWTTMMNGMVQNGCSEEAILFLRKMQESGLRP), 545 to 575 (NAFSITVALSACAHLASLHIGRTIHGYIIRN), 581 to 611 (LVSIETSLVDMYAKCGDINKAEKVFGSKLYS), 612 to 646 (ELPLSNAMISAYALYGNLKEAIALYRSLEGVGLKP), 647 to 682 (DNITITNVLSACNHAGDINQAIEIFTDIVSKRSMKP), and 683 to 713 (CLEHYGLMVDLLASAGETEKALRLIEEMPFK). Residues 718–793 (MIQSLVASCN…KPGCSWIQIT (76 aa)) are type E motif. Residues 796 to 826 (EGVHVFVANDKTHTRINEIQMMLALLLYDMG) are type E(+) motif.

It belongs to the PPR family. PCMP-E subfamily.

The protein resides in the plastid. It localises to the chloroplast. Its function is as follows. Plays a major role in chloroplast RNA editing. Acts as a site-recognition transacting factor involved in the edition of the site 2 of ndhD (ndhD-2), which encodes a subunit of the NDH complex. This Arabidopsis thaliana (Mouse-ear cress) protein is Pentatricopeptide repeat-containing protein At5g55740, chloroplastic (CRR21).